Consider the following 420-residue polypeptide: Acetyl-CoA acetyltransferase B, mitochondrial (420 aa).

The transit peptide at 1 to 33 (MAFCGPRTAARLSHSTRALHYTHRSFASPRTLN) directs the protein to the mitochondrion. The active-site Acyl-thioester intermediate is cysteine 119. Residues tyrosine 212, 251–253 (RVD), and lysine 256 each bind CoA. K(+) is bound at residue tyrosine 212. K(+) is bound by residues alanine 273 and alanine 274. Serine 277 contacts CoA. Valine 374 is a binding site for K(+). The active-site Proton donor/acceptor is cysteine 406.

It belongs to the thiolase-like superfamily. Thiolase family. Homotetramer.

The protein localises to the mitochondrion. The catalysed reaction is 2 acetyl-CoA = acetoacetyl-CoA + CoA. The enzyme catalyses propanoyl-CoA + acetyl-CoA = 2-methyl-3-oxobutanoyl-CoA + CoA. The protein operates within lipid metabolism; fatty acid beta-oxidation. In terms of biological role, this is one of the enzymes that catalyzes the last step of the mitochondrial beta-oxidation pathway, an aerobic process breaking down fatty acids into acetyl-CoA. Using free coenzyme A/CoA, catalyzes the thiolytic cleavage of medium- to long-chain 3-oxoacyl-CoAs into acetyl-CoA and a fatty acyl-CoA shortened by two carbon atoms. The activity of the enzyme is reversible and it can also catalyze the condensation of two acetyl-CoA molecules into acetoacetyl-CoA. Thereby, it plays a major role in ketone body metabolism. The chain is Acetyl-CoA acetyltransferase B, mitochondrial (acat1-b) from Xenopus laevis (African clawed frog).